Here is a 448-residue protein sequence, read N- to C-terminus: Probable D-serine dehydratase (448 aa).

Lysine 111 carries the N6-(pyridoxal phosphate)lysine modification.

It belongs to the serine/threonine dehydratase family. DsdA subfamily. Pyridoxal 5'-phosphate serves as cofactor.

The catalysed reaction is D-serine = pyruvate + NH4(+). The sequence is that of Probable D-serine dehydratase from Rhizobium etli (strain CIAT 652).